The primary structure comprises 300 residues: Transcription factor DUO1 (300 aa).

HTH myb-type domains are found at residues 8-64 (KEEI…RPNL) and 65-116 (KNGC…KRLA). DNA-binding regions (H-T-H motif) lie at residues 36–60 (WSSI…VNKL) and 89–112 (WARI…SSRQ). Residues 123–135 (SDASSSSFNPKSS) show a composition bias toward low complexity. Residues 123-145 (SDASSSSFNPKSSSSHRLKGKNV) are disordered. Basic residues predominate over residues 136-145 (SSHRLKGKNV).

As to expression, confined to inflorescences, especially in stamens and pollen.

The protein localises to the nucleus. Transcription activator that acts as a positive regulator of male germline development by promoting both gametic cell specification and cell cycle progression. Binds to canonical MYB sites 5'-AACCGTC-3', 5'-AAACCGC-3' and 5'-AACCGT-3' in promoters to trigger the expression of male germline-specific or enriched genes (e.g. MGH3, GEX2 and GCS1), including those required for fertilization. Required for sperm cell specification leading to pollen maturation by activating a germline-specific regulon. Involved in pollen mitosis entry at G2-M transition via the regulation of CYCB1-1, DAZ1 and DAZ2 expression. This chain is Transcription factor DUO1, found in Arabidopsis thaliana (Mouse-ear cress).